A 277-amino-acid polypeptide reads, in one-letter code: Large ribosomal subunit protein uL2 (277 aa).

Residues 211-277 (SRWKGVRPTV…KLIVRGRKKK (67 aa)) form a disordered region.

This sequence belongs to the universal ribosomal protein uL2 family. In terms of assembly, part of the 50S ribosomal subunit. Forms a bridge to the 30S subunit in the 70S ribosome.

In terms of biological role, one of the primary rRNA binding proteins. Required for association of the 30S and 50S subunits to form the 70S ribosome, for tRNA binding and peptide bond formation. It has been suggested to have peptidyltransferase activity; this is somewhat controversial. Makes several contacts with the 16S rRNA in the 70S ribosome. In Staphylococcus epidermidis (strain ATCC 35984 / DSM 28319 / BCRC 17069 / CCUG 31568 / BM 3577 / RP62A), this protein is Large ribosomal subunit protein uL2.